The primary structure comprises 294 residues: 2-dehydro-3-deoxy-phosphogluconate/2-dehydro-3-deoxy-6-phosphogalactonate aldolase (294 aa).

Residues 43–44, 130–132, and 155–157 each bind substrate; these read TT, YNY, and KDT. The active-site Schiff-base intermediate with substrate is the K155.

Belongs to the DapA family. KDPG aldolase subfamily. Homotetramer; dimer of dimers.

It catalyses the reaction 2-dehydro-3-deoxy-6-phospho-D-gluconate = D-glyceraldehyde 3-phosphate + pyruvate. It carries out the reaction 2-dehydro-3-deoxy-6-phospho-D-galactonate = D-glyceraldehyde 3-phosphate + pyruvate. The protein operates within carbohydrate acid metabolism; 2-dehydro-3-deoxy-D-gluconate degradation; D-glyceraldehyde 3-phosphate and pyruvate from 2-dehydro-3-deoxy-D-gluconate: step 2/2. Involved in the degradation of glucose and galactose via the Entner-Doudoroff pathway. Catalyzes the reversible cleavage of 2-keto-3-deoxy-6-phosphogluconate (KDPG) and 2-keto-3-deoxygluconate (KDG) forming pyruvate and glyceraldehyde 3-phosphate or glyceraldehyde, respectively. It is also able to catalyze the reversible cleavage of 2-keto-3-deoxy-6-phosphogalactonate (KDPGal) and 2-keto-3-deoxygalactonate (KDGal). It is equally active with both D- and L-glyceraldehyde. This Saccharolobus solfataricus (Sulfolobus solfataricus) protein is 2-dehydro-3-deoxy-phosphogluconate/2-dehydro-3-deoxy-6-phosphogalactonate aldolase.